The chain runs to 149 residues: Nucleoside diphosphate kinase (149 aa).

ATP-binding residues include Lys9, Phe57, Arg85, Thr91, Arg102, and Asn112. Residue His115 is the Pros-phosphohistidine intermediate of the active site.

It belongs to the NDK family. As to quaternary structure, homotetramer. Mg(2+) serves as cofactor.

It is found in the cytoplasm. The catalysed reaction is a 2'-deoxyribonucleoside 5'-diphosphate + ATP = a 2'-deoxyribonucleoside 5'-triphosphate + ADP. It catalyses the reaction a ribonucleoside 5'-diphosphate + ATP = a ribonucleoside 5'-triphosphate + ADP. In terms of biological role, major role in the synthesis of nucleoside triphosphates other than ATP. The ATP gamma phosphate is transferred to the NDP beta phosphate via a ping-pong mechanism, using a phosphorylated active-site intermediate. The protein is Nucleoside diphosphate kinase of Herpetosiphon aurantiacus (strain ATCC 23779 / DSM 785 / 114-95).